A 214-amino-acid polypeptide reads, in one-letter code: Dephospho-CoA kinase (214 aa).

Positions K3–A202 constitute a DPCK domain. G11–R16 provides a ligand contact to ATP.

This sequence belongs to the CoaE family.

It is found in the cytoplasm. It carries out the reaction 3'-dephospho-CoA + ATP = ADP + CoA + H(+). It participates in cofactor biosynthesis; coenzyme A biosynthesis; CoA from (R)-pantothenate: step 5/5. Its function is as follows. Catalyzes the phosphorylation of the 3'-hydroxyl group of dephosphocoenzyme A to form coenzyme A. The polypeptide is Dephospho-CoA kinase (Bordetella pertussis (strain Tohama I / ATCC BAA-589 / NCTC 13251)).